The chain runs to 466 residues: Argininosuccinate lyase (466 aa).

This sequence belongs to the lyase 1 family. Argininosuccinate lyase subfamily.

Its subcellular location is the cytoplasm. The enzyme catalyses 2-(N(omega)-L-arginino)succinate = fumarate + L-arginine. The protein operates within amino-acid biosynthesis; L-arginine biosynthesis; L-arginine from L-ornithine and carbamoyl phosphate: step 3/3. This chain is Argininosuccinate lyase, found in Ehrlichia ruminantium (strain Gardel).